Here is a 205-residue protein sequence, read N- to C-terminus: Protein phosphatase inhibitor 2 (205 aa).

Disordered regions lie at residues 1–46 (MAAS…KSQK) and 64–205 (GLMK…SQSS). An N-acetylalanine modification is found at alanine 2. Required for binding PPP1CC stretches follow at residues 12–17 (KGILKN) and 43–55 (KSQKWDEMNILAT). Residues 17–26 (NKTSSTSSRV) show a composition bias toward polar residues. Over residues 35-46 (SVDEELSKKSQK) the composition is skewed to basic and acidic residues. Serine 44 carries the post-translational modification Phosphoserine; by ATM. Threonine 73 is subject to Phosphothreonine; by GSK3. The span at 80 to 91 (GDDDDAYSDTET) shows a compositional bias: acidic residues. The residue at position 87 (serine 87) is a Phosphoserine. 3 positions are modified to phosphothreonine: threonine 89, threonine 92, and threonine 96. Over residues 110–120 (SEPKYRIREQE) the composition is skewed to basic and acidic residues. 4 positions are modified to phosphoserine: serine 121, serine 122, serine 127, and serine 130. Residues 121 to 130 (SSGEEDSDLS) are compositionally biased toward acidic residues. Basic and acidic residues predominate over residues 131 to 143 (PEEREKKRQFEMK). Positions 147-150 (HYNE) are required for binding PPP1CC catalytic center, displacing metal ions and inhibition of PPP1CC catalytic activity. Positions 167-179 (DDEEDEEMSETAD) are enriched in acidic residues. Positions 182-205 (SMNTEESNQGSTPSDQRQNKSQSS) are enriched in polar residues.

Belongs to the protein phosphatase inhibitor 2 family. In terms of assembly, heterodimer with PP1. Phosphorylation on Ser-44 by ATM activates PP1 by dissociating the PP1-PPP1R2 complex. Phosphorylation on Thr-73 by GSK3 activates PP1 by dissociating the PP1-PPP1R2 complex.

In terms of biological role, inhibitor of protein-phosphatase 1. The polypeptide is Protein phosphatase inhibitor 2 (PPP1R2) (Oryctolagus cuniculus (Rabbit)).